A 355-amino-acid polypeptide reads, in one-letter code: Protein RecA (355 aa).

Gly67–Thr74 lines the ATP pocket. The tract at residues Asn335–Phe355 is disordered. Residues Val341–Phe355 show a composition bias toward acidic residues.

Belongs to the RecA family.

It localises to the cytoplasm. Can catalyze the hydrolysis of ATP in the presence of single-stranded DNA, the ATP-dependent uptake of single-stranded DNA by duplex DNA, and the ATP-dependent hybridization of homologous single-stranded DNAs. It interacts with LexA causing its activation and leading to its autocatalytic cleavage. The polypeptide is Protein RecA (Sodalis glossinidius).